The primary structure comprises 177 residues: ATP synthase subunit delta (177 aa).

The protein belongs to the ATPase delta chain family. In terms of assembly, F-type ATPases have 2 components, F(1) - the catalytic core - and F(0) - the membrane proton channel. F(1) has five subunits: alpha(3), beta(3), gamma(1), delta(1), epsilon(1). F(0) has three main subunits: a(1), b(2) and c(10-14). The alpha and beta chains form an alternating ring which encloses part of the gamma chain. F(1) is attached to F(0) by a central stalk formed by the gamma and epsilon chains, while a peripheral stalk is formed by the delta and b chains.

It localises to the cell inner membrane. Its function is as follows. F(1)F(0) ATP synthase produces ATP from ADP in the presence of a proton or sodium gradient. F-type ATPases consist of two structural domains, F(1) containing the extramembraneous catalytic core and F(0) containing the membrane proton channel, linked together by a central stalk and a peripheral stalk. During catalysis, ATP synthesis in the catalytic domain of F(1) is coupled via a rotary mechanism of the central stalk subunits to proton translocation. This protein is part of the stalk that links CF(0) to CF(1). It either transmits conformational changes from CF(0) to CF(1) or is implicated in proton conduction. The sequence is that of ATP synthase subunit delta from Haemophilus influenzae (strain PittEE).